A 101-amino-acid chain; its full sequence is Small ribosomal subunit protein uS10 (101 aa).

Belongs to the universal ribosomal protein uS10 family. In terms of assembly, part of the 30S ribosomal subunit.

Functionally, involved in the binding of tRNA to the ribosomes. The polypeptide is Small ribosomal subunit protein uS10 (Corynebacterium jeikeium (strain K411)).